A 144-amino-acid polypeptide reads, in one-letter code: Transcriptional regulator MraZ (144 aa).

SpoVT-AbrB domains follow at residues 5-47 (EYDH…TLDE) and 76-119 (AVEV…DRET).

Belongs to the MraZ family. As to quaternary structure, forms oligomers.

It localises to the cytoplasm. The protein localises to the nucleoid. In Staphylococcus aureus, this protein is Transcriptional regulator MraZ.